We begin with the raw amino-acid sequence, 725 residues long: MSSEAKCPFPHAANRSRSNQDWWPNQLRVDVLNQHSNKSNPLGEKFNYAEEFKKLDYKALKADLVKLMTDSQDWWPADFGHYGPQFVRMAWHATGTYRTMDGRGGGGRGQQRFAPLNSWPDNVNIDKSRRLLWPIKQKYGQRISWADLLVLTGNVALESMGFRTFGFAGGRADVWEPDTDVNWGAETTWLGTDKRFSGDRELDENLSATHMGLIYVNPEGPDGSGDYMAAAKDIRATFYRMAMDDEEIVALIAGGHTFGKAHGAAPESHKGAEPEGAPIEAQGLGWVSNFGDGYGKDTVSSGLEVTWTKTPALWSNNFFENLFKYEWEITKSPAGAKQWVAKDAEDIIPDAHIKGKFHKPTMLTTDLTLRFDPEFGKISKRFYEDPQAFAEAFARAWFKLTHRDMGPRSRYLGPEVPKEELIWQDPIPEVDYKLVDAADVTALKAKLLTSGLSVSELVGTAWASASTFRGSDKRGGANGARIRLAPMKDWEVNQPEQLAKVLKTLEGIQADFNQSASGGKQVSLADLIVLAGSVGVEQAAKAAGVNVSVPFAAGRNDARQDQTDVESFAALEPRTDGFRNYVGKKNGVPAEVALIDKAQLLCLSVPELTVLISGLRAININVGGVKHGVLTRTPGVLNNEVLLNLLDMGTQWKPVESDANVFEGRDRKSGEVKWTATRADLVFGSNSILRSVAEVYAESDAKEKFVKDFVAAWVKVMNADRFDLA.

A disordered region spans residues 1–20; sequence MSSEAKCPFPHAANRSRSNQ. The segment at residues 91–215 is a cross-link (tryptophyl-tyrosyl-methioninium (Trp-Tyr) (with M-241)); the sequence is WHATGTYRTM…LSATHMGLIY (125 aa). His92 functions as the Proton acceptor in the catalytic mechanism. A cross-link (tryptophyl-tyrosyl-methioninium (Tyr-Met) (with W-91)) is located at residues 215 to 241; that stretch reads YVNPEGPDGSGDYMAAAKDIRATFYRM. His256 is a binding site for heme b.

This sequence belongs to the peroxidase family. Peroxidase/catalase subfamily. In terms of assembly, homodimer or homotetramer. Requires heme b as cofactor. In terms of processing, formation of the three residue Trp-Tyr-Met cross-link is important for the catalase, but not the peroxidase activity of the enzyme.

It catalyses the reaction H2O2 + AH2 = A + 2 H2O. The enzyme catalyses 2 H2O2 = O2 + 2 H2O. Functionally, bifunctional enzyme with both catalase and broad-spectrum peroxidase activity. In Janthinobacterium sp. (strain Marseille) (Minibacterium massiliensis), this protein is Catalase-peroxidase.